The primary structure comprises 355 residues: Peptide chain release factor 1 (355 aa).

Gln-233 carries the post-translational modification N5-methylglutamine.

This sequence belongs to the prokaryotic/mitochondrial release factor family. Post-translationally, methylated by PrmC. Methylation increases the termination efficiency of RF1.

The protein resides in the cytoplasm. Peptide chain release factor 1 directs the termination of translation in response to the peptide chain termination codons UAG and UAA. The protein is Peptide chain release factor 1 of Dehalococcoides mccartyi (strain ATCC BAA-2100 / JCM 16839 / KCTC 5957 / BAV1).